The sequence spans 580 residues: Mucin-1 (580 aa).

A signal peptide spans 1–22 (MTPDIQAPFLSLLLLFPVLTVA). The Extracellular segment spans residues 23–489 (NVPTLTTSDS…GSGVPGWGIA (467 aa)). Residues 28–37 (TTSDSINPRR) show a composition bias toward polar residues. Residues 28–359 (TTSDSINPRR…SIALSTSSNP (332 aa)) form a disordered region. A compositionally biased stretch (low complexity) spans 38 to 88 (TTPVSTTQSSPTSSPTKETSWSTTTTLLTASSPAPSPAASPGHDGASTPTS). 11 repeat units span residues 70 to 89 (PAPS…PTSS), 90 to 109 (PAPS…PTSS), 110 to 129 (PAPS…PTSS), 130 to 149 (PAPS…PTSS), 150 to 169 (PAPS…PTGS), 170 to 189 (PAPS…PTSS), 190 to 209 (PAPS…PTGS), 210 to 229 (PAPS…PTSS), 230 to 249 (PAPS…PTGS), 250 to 269 (PAPS…LTSS), and 270 to 289 (PAPS…PTSS). The segment at 70 to 289 (PAPSPAASPG…QHGASSPTSS (220 aa)) is 11 X 20 AA approximate tandem repeats of P-A-P-S-P-A-A-S-P-G-H-D-G-A-S-T-P-T-S-S. Residues Ser73, Ser77, and Ser84 are each glycosylated (O-linked (GalNAc...) serine). Residues Thr85 and Thr87 are each glycosylated (O-linked (GalNAc...) threonine). O-linked (GalNAc...) serine glycosylation is found at Ser88 and Ser89. Low complexity-rich tracts occupy residues 96-108 (ASPG…TPTS), 116-128 (ASPG…TPTS), 136-148 (ASPG…TPTS), 156-168 (ASPG…SPTG), 176-188 (ASPG…TPTS), 196-208 (ASPG…SPTG), 216-228 (ASPG…TPTS), 236-248 (ASPG…SPTG), and 256-306 (ASPG…MVTS). N-linked (GlcNAc...) asparagine glycosylation occurs at Asn161. N-linked (GlcNAc...) asparagine glycosylation is present at Asn201. N-linked (GlcNAc...) asparagine glycosylation occurs at Asn241. Over residues 308 to 344 (HKGTSSRATMTPVSKGTPSSVPSSETAPTAASHITRT) the composition is skewed to polar residues. Positions 345-357 (AASSPSIALSTSS) are enriched in low complexity. The SEA domain occupies 368–475 (RVSLYFLSFR…VSVYSAPFPS (108 aa)). Residues Asn384 and Asn460 are each glycosylated (N-linked (GlcNAc...) asparagine). Residues 490–510 (LLVLVCVLVALAIIYLIALVV) traverse the membrane as a helical segment. S-palmitoyl cysteine attachment occurs at residues Cys511 and Cys513. Over 511-580 (CQCGRKKCEQ…TNLAATSANL (70 aa)) the chain is Cytoplasmic. Positions 519 to 555 (EQLDVFPTLDAYHPMSEYSTYHTHGRYVPPGSTKRSP) are interaction with P53. Tyr530 is subject to Phosphotyrosine; by PDGFR. An Interaction with GRB2 motif is present at residues 530 to 533 (YHPM). Tyr539 bears the Phosphotyrosine mark. A disordered region spans residues 544 to 563 (RYVPPGSTKRSPYEEVSAGN). Tyr545 bears the Phosphotyrosine; by PDGFR mark. The tract at residues 550-557 (STKRSPYE) is required for interaction with GSK3B. Thr551 bears the Phosphothreonine; by PKC/PRKCD mark. Position 554 is a phosphoserine; by GSK3-beta (Ser554). Position 556 is a phosphotyrosine; by CSK, EGFR and SRC (Tyr556). Residues 556–559 (YEEV) carry the Interaction with SRC and ESR1 motif. The segment at 560–568 (SAGNGGSNL) is required for interaction with beta- and gamma-catenins. Tyr570 is modified (phosphotyrosine). The Required for interaction with AP1S2 signature appears at 570–572 (YTN).

In terms of assembly, the alpha subunit forms a tight, non-covalent heterodimeric complex with the proteolytically-released beta subunit. Binds directly the SH2 domain of GRB2, and forms a MUC1/GRB2/SOS1 complex involved in RAS signaling. The cytoplasmic tail (MUC1CT) interacts with several proteins such as, SRC, CTNNB1 and ERBs. Interaction with the SH2 domain of CSK decreases interaction with GSK3B. Interacts with CTNNB1/beta-catenin and JUP/gamma-catenin and promotes cell adhesion. Interaction with JUP/gamma-catenin is induced by heregulin. Binds PRKCD, ERBB2, ERBB3 and ERBB4. Heregulin (HRG) stimulates the interaction with ERBB2 and, to a much lesser extent, the interaction with ERBB3 and ERBB4. Interacts with P53 in response to DNA damage. Interacts with KLF4. Interacts with estrogen receptor alpha/ESR1, through its DNA-binding domain, and stimulates its transcription activity. Binds ADAM17. Post-translationally, highly glycosylated (N- and O-linked carbohydrates and sialic acid). O-linked glycosylation consists mainly of GalNAc, galactose, and sialic acid. The ratio from pools of milk from different dairy breeds is GalNAc: GlcNAc:galactose:mannose:sialic acid is 14:1:10:1:15. Proteolytic cleavage in the SEA domain occurs in the endoplasmic reticulum by an autoproteolytic mechanism and requires the full-length SEA domain as well as requiring a Ser, Thr or Cys residue at the P + 1 site. Ectodomain shedding is mediated by ADAM17 in uterine epithelial cells. In terms of processing, dual palmitoylation on cysteine residues in the CQC motif is required for recycling from endosomes back to the plasma membrane. Post-translationally, phosphorylated on tyrosines and serine residues in the C-terminal. Phosphorylation on tyrosines in the C-terminal increases the nuclear location of MUC1 and beta-catenin. Phosphorylation by PKC delta induces binding of MUC1 to beta-catenin/CTNNB1 and thus decreases the formation of the beta-catenin/E-cadherin complex. Src-mediated phosphorylation inhibits interaction with GSK3B. Csk- or Src- or EGFR-mediated phosphorylation on Tyr-556 increases binding to beta-catenin/CTNNB1. GSK3B-mediated phosphorylation on Ser-554 decreases this interaction but restores the formation of the beta-cadherin/E-cadherin complex. On T-cell receptor activation, phosphorylated by LCK. PDGFR-mediated phosphorylation increases nuclear colocalization of MUC1CT and CTNNB1. In terms of tissue distribution, expressed on the apical surface of epithelia cells, and on the milk fat globule membrane (MGGM).

It localises to the apical cell membrane. The protein resides in the cell membrane. The protein localises to the cytoplasm. Its subcellular location is the nucleus. In terms of biological role, the alpha subunit has cell adhesive properties. May provide a protective layer on epithelial cells against bacterial and enzyme attack. The beta subunit contains a C-terminal domain which is involved in cell signaling, through phosphorylations and protein-protein interactions. Modulates signaling in ERK, Src and NF-kappa-B pathways. In activated T-cells, influences directly or indirectly the Ras/MAPK pathway. Promotes tumor progression. Regulates P53-mediated transcription and determines cell fate in the genotoxic stress response. Binds, together with KLF4, the PE21 promoter element of P53 and represses P53 activity. The sequence is that of Mucin-1 (MUC1) from Bos taurus (Bovine).